We begin with the raw amino-acid sequence, 621 residues long: Lamin-C (621 aa).

The tract at residues 1-47 is disordered; it reads MSARRVTLNTRVSRASTSTPVGGASTSSRVGATSPTSPTRTSRQQEK. The segment at 1–47 is head; that stretch reads MSARRVTLNTRVSRASTSTPVGGASTSSRVGATSPTSPTRTSRQQEK. The segment covering 7–31 has biased composition (polar residues); the sequence is TLNTRVSRASTSTPVGGASTSSRVG. The span at 33–42 shows a compositional bias: low complexity; sequence TSPTSPTRTS. S34 is subject to Phosphoserine. The 357-residue stretch at 46-402 folds into the IF rod domain; it reads EKEELQHLND…KLLCGEERRL (357 aa). Positions 47-85 are coil 1A; the sequence is KEELQHLNDRLACYIDRMRNLENENSRLTQELNLAQDTV. Positions 86–95 are linker 1; the sequence is NRETSNLKAV. Positions 96-233 are coil 1B; it reads YEKELAAARK…QVHTQELTET (138 aa). Residues 234-257 form a linker 2 region; the sequence is RSRRQIEISEIDGRLSRQYEAKLQ. Positions 258–403 are coil 2; the sequence is QSLQELRDQY…LLCGEERRLN (146 aa). Positions 404–458 are disordered; the sequence is IESPGRPTTDSGISSNGSHLTASASSRSGRVTPSGRRSATPGISGSSAVKRRRTV. The interval 404–621 is tail; sequence IESPGRPTTD…GVRSLFSLLF (218 aa). A phosphoserine mark is found at S406 and S441. The span at 409-450 shows a compositional bias: polar residues; that stretch reads RPTTDSGISSNGSHLTASASSRSGRVTPSGRRSATPGISGSS. Position 443 is a phosphothreonine (T443). The short motif at 453-458 is the Nuclear localization signal element; that stretch reads KRRRTV. One can recognise an LTD domain in the interval 468 to 582; sequence SEYSVNAAAK…EDVASYDRVR (115 aa). Positions 585 to 605 are disordered; that stretch reads VSSHTSRHRSSGTPSTGFTLG.

Belongs to the intermediate filament family. In terms of assembly, interacts with MAN1. In terms of tissue distribution, first detected from late stage 12 in the oenocytes, abdominal segments, hindgut and posterior spiracles, with expression increasing in stage 13 (at protein level). In stage 14, also becomes detectable in the foregut (at protein level). Stage 15 shows expression in the epidermis, dorsal longitudinal trunk, pharynx, esophagus and proventriculus, with the dorsal pharyngeal musculature showing expression in late stage 15 (at protein level). In stage 16 embryos, also detected in the exit glia with increasing expression in the somatic musculature (at protein level). Also detected in the visceral mesoderm but not in the midgut or central nervous system until the end of embryogenesis (at protein level). In third instar larvae, detectable at varying levels in all cell types (at protein level). Expressed in spermatocytes (at protein level).

Its subcellular location is the nucleus. The protein resides in the nucleus lamina. Functionally, lamins are components of the nuclear lamina, a fibrous layer on the nucleoplasmic side of the inner nuclear membrane, which is thought to provide a framework for the nuclear envelope and may also interact with chromatin. In spermatocytes, regulates cytokinesis during meiosis. The polypeptide is Lamin-C (LamC) (Drosophila melanogaster (Fruit fly)).